The chain runs to 219 residues: Probable nicotinate-nucleotide adenylyltransferase (219 aa).

The protein belongs to the NadD family.

The enzyme catalyses nicotinate beta-D-ribonucleotide + ATP + H(+) = deamido-NAD(+) + diphosphate. It functions in the pathway cofactor biosynthesis; NAD(+) biosynthesis; deamido-NAD(+) from nicotinate D-ribonucleotide: step 1/1. Its function is as follows. Catalyzes the reversible adenylation of nicotinate mononucleotide (NaMN) to nicotinic acid adenine dinucleotide (NaAD). This is Probable nicotinate-nucleotide adenylyltransferase from Pseudomonas putida (strain W619).